A 307-amino-acid chain; its full sequence is DDRGK domain-containing protein 1 (307 aa).

The Lumenal portion of the chain corresponds to 1-2 (MD). The chain crosses the membrane as a helical span at residues 3–23 (LILLVGIAVALLVILATLYFL). The Cytoplasmic segment spans residues 24–307 (QNKNKAAGEA…PVQSAAGGDS (284 aa)). Low complexity-rich tracts occupy residues 32 to 43 (EAKPAAAAPRRG) and 54 to 83 (RRAQ…PAAA). A disordered region spans residues 32 to 162 (EAKPAAAAPR…EEVEAEAERK (131 aa)). The segment covering 117–162 (KMEAKEQKRLQREHELQEREKRKVKEAKEDAERKQQEEVEAEAERK) has biased composition (basic and acidic residues).

Belongs to the DDRGK1 family. As to quaternary structure, interacts with Atg9; the interaction is transient.

The protein localises to the endoplasmic reticulum membrane. Substrate adapter for ufmylation, the covalent attachment of the ubiquitin-like modifier UFM1 to substrate proteins. Required for ufmylation of Atg9; protects the nervous system during aging, possibly by stabilizing Atg9 and supporting its function. The polypeptide is DDRGK domain-containing protein 1 (Drosophila willistoni (Fruit fly)).